Consider the following 412-residue polypeptide: Subtilisin-like protease 6 (412 aa).

The signal sequence occupies residues 1–20; sequence MGFITKAIPIVLAALSTVNG. The propeptide occupies 21–126; sequence AKILEAGPHA…VVRTSTNGTN (106 aa). An Inhibitor I9 domain is found at 36–120; that stretch reads KYIVVMKREV…YIEPDFVVRT (85 aa). N-linked (GlcNAc...) asparagine glycosylation is found at N123 and N126. Positions 135-412 constitute a Peptidase S8 domain; it reads SWGLARVSSK…SKLIYNGSGK (278 aa). Catalysis depends on charge relay system residues D167 and H198. Residues N252 and N264 are each glycosylated (N-linked (GlcNAc...) asparagine). S358 serves as the catalytic Charge relay system. N408 is a glycosylation site (N-linked (GlcNAc...) asparagine).

Belongs to the peptidase S8 family.

The protein localises to the secreted. Secreted subtilisin-like serine protease with keratinolytic activity that contributes to pathogenicity. The chain is Subtilisin-like protease 6 (SUB6) from Trichophyton equinum (Horse ringworm fungus).